The following is a 239-amino-acid chain: Ribonuclease 3 (239 aa).

The region spanning 18–141 (YLTLEKALGY…LMAGVYLEAG (124 aa)) is the RNase III domain. A Mg(2+)-binding site is contributed by E54. Residue D58 is part of the active site. Mg(2+) contacts are provided by S127 and E130. E130 is an active-site residue. Residues 168–237 (DYKTALQELT…AYQALQKLKE (70 aa)) form the DRBM domain.

It belongs to the ribonuclease III family. Homodimer. Mg(2+) is required as a cofactor.

Its subcellular location is the cytoplasm. The catalysed reaction is Endonucleolytic cleavage to 5'-phosphomonoester.. Functionally, digests double-stranded RNA. Involved in the processing of primary rRNA transcript to yield the immediate precursors to the large and small rRNAs (23S and 16S). Processes some mRNAs, and tRNAs when they are encoded in the rRNA operon. Processes pre-crRNA and tracrRNA of type II CRISPR loci if present in the organism. This chain is Ribonuclease 3, found in Helicobacter pylori (strain J99 / ATCC 700824) (Campylobacter pylori J99).